We begin with the raw amino-acid sequence, 439 residues long: MPEGNKIDLSGDGGVLKEILKEGTGTETPHSGCTVSLHYTGRLVDGTEFDSSLSRNEPFEFSLGKGNVIKAFDMGVATMKLGERCFLTCAPNYAYGAAGSPPAIPPDATLIFELEMLGWKGEDLSPNQDGSIDRTILEASDKKRTPSDGAFVKAHISGSFEGRVFEDRDVEFDYGEGKAIGIIDGVEIALEKMNVGETSRIKIQAKYAFGAKGNEEFKIPPNATVEYTVKLVDCGKGLEEWKLSDEERLAEAKVYKEKGTNYFKKENWALAIKMYTKCKNILPTTVHTNEEVKKIKVATHSNIALCHQKSNDHFEAKQECNEVLALDKNNVKALYRRGQCNLTINELEDALEDFQKVIQLEPGNKAAANQVIICKQKLKESKNKEKKLYANMFTKLAANDKETEPPRETDVLSKCGEWSEEDAKREAELTLERDNIIMI.

2 PPIase FKBP-type domains span residues 32-120 (GCTV…LGWK) and 149-235 (GAFV…VDCG). TPR repeat units follow at residues 252 to 285 (AKVYKEKGTNYFKKENWALAIKMYTKCKNILPTT), 297 to 330 (VATHSNIALCHQKSNDHFEAKQECNEVLALDKNN), and 331 to 364 (VKALYRRGQCNLTINELEDALEDFQKVIQLEPGN).

In terms of assembly, interacts with inaD and trpl, and may be part of the inaD signaling complex. Expression in the embryo is limited to three tissues: lymph glands, Garland cells and oenocyte cells.

It catalyses the reaction [protein]-peptidylproline (omega=180) = [protein]-peptidylproline (omega=0). In terms of biological role, may have a role in phototransduction; inhibits or prevents Ca(2+) induced stimulation of the trpl ion channel. In Drosophila melanogaster (Fruit fly), this protein is FK506-binding protein 59.